Here is a 470-residue protein sequence, read N- to C-terminus: Cell division protein FtsP (470 aa).

Positions 1–27 (MSFSRRQFLQASGIALCAGAIPLRANA) form a signal peptide, tat-type signal. Positions 222–287 (VEVSRGWVRL…RREILVDMTN (66 aa)) constitute a Plastocyanin-like domain.

The protein belongs to the FtsP family. Predicted to be exported by the Tat system. The position of the signal peptide cleavage has not been experimentally proven.

Its subcellular location is the periplasm. Functionally, cell division protein that is required for growth during stress conditions. May be involved in protecting or stabilizing the divisomal assembly under conditions of stress. The polypeptide is Cell division protein FtsP (Salmonella typhi).